A 69-amino-acid chain; its full sequence is Metallothionein-like protein CRS5 (69 aa).

This sequence belongs to the metallothionein superfamily. Type 13 family.

Its function is as follows. Critical role in copper (specific) homeostasis and detoxification. May protect by directly chelating and sequestering copper ions. The sequence is that of Metallothionein-like protein CRS5 (CRS5) from Saccharomyces cerevisiae (strain RM11-1a) (Baker's yeast).